The primary structure comprises 350 residues: UDP-N-acetylglucosamine--N-acetylmuramyl-(pentapeptide) pyrophosphoryl-undecaprenol N-acetylglucosamine transferase (350 aa).

UDP-N-acetyl-alpha-D-glucosamine-binding positions include T9 to G11, N123, R159, S181, and Q281.

This sequence belongs to the glycosyltransferase 28 family. MurG subfamily.

The protein resides in the cell inner membrane. The catalysed reaction is di-trans,octa-cis-undecaprenyl diphospho-N-acetyl-alpha-D-muramoyl-L-alanyl-D-glutamyl-meso-2,6-diaminopimeloyl-D-alanyl-D-alanine + UDP-N-acetyl-alpha-D-glucosamine = di-trans,octa-cis-undecaprenyl diphospho-[N-acetyl-alpha-D-glucosaminyl-(1-&gt;4)]-N-acetyl-alpha-D-muramoyl-L-alanyl-D-glutamyl-meso-2,6-diaminopimeloyl-D-alanyl-D-alanine + UDP + H(+). The protein operates within cell wall biogenesis; peptidoglycan biosynthesis. Its function is as follows. Cell wall formation. Catalyzes the transfer of a GlcNAc subunit on undecaprenyl-pyrophosphoryl-MurNAc-pentapeptide (lipid intermediate I) to form undecaprenyl-pyrophosphoryl-MurNAc-(pentapeptide)GlcNAc (lipid intermediate II). The chain is UDP-N-acetylglucosamine--N-acetylmuramyl-(pentapeptide) pyrophosphoryl-undecaprenol N-acetylglucosamine transferase from Helicobacter hepaticus (strain ATCC 51449 / 3B1).